The chain runs to 366 residues: Bacteriochlorophyll a protein (366 aa).

Bacteriochlorophyll a contacts are provided by His-111, His-146, His-290, His-297, and His-298.

As to quaternary structure, homotrimer. Each subunit contains 7 molecules of bacteriochlorophyll a.

Functionally, intermediary in the transfer of excitation energy from the chlorophyll to the reaction centers. This is Bacteriochlorophyll a protein (fmoA) from Chlorobaculum tepidum (strain ATCC 49652 / DSM 12025 / NBRC 103806 / TLS) (Chlorobium tepidum).